The chain runs to 355 residues: Cyclin-D1-binding protein 1 (355 aa).

Ala-2 is subject to N-acetylalanine. Interaction with TCF3 stretches follow at residues 2-181 and 147-355; these read ASST…VDLV and ISCN…AVEL. The segment at 2 to 187 is interaction with RPLP0; that stretch reads ASSTTPVSFL…VDLVKDAHEE (186 aa). A required for interaction with CCND1 region spans residues 2-205; it reads ASSTTPVSFL…DPYCGLLDDS (204 aa). Residues 203 to 224 are disordered; the sequence is DDSEDNSDSHHNEDGVGLPSNR. The segment at 235-355 is interaction with RPLP0; it reads LITPCLALVR…KELTQRAVEL (121 aa).

This sequence belongs to the CCNDBP1 family. Interacts with CCND1 and GRAP2. May also interact with COPS5, RPLP0, SIRT6, SYF2 and TCF3. Phosphorylated.

It localises to the cytoplasm. The protein resides in the nucleus. Its function is as follows. May negatively regulate cell cycle progression. May act at least in part via inhibition of the cyclin-D1/CDK4 complex, thereby preventing phosphorylation of RB1 and blocking E2F-dependent transcription. In Rattus norvegicus (Rat), this protein is Cyclin-D1-binding protein 1 (Ccndbp1).